The sequence spans 435 residues: Glutamyl-tRNA reductase (435 aa).

Substrate is bound by residues 49 to 52 (TCNR), Ser-109, 114 to 116 (EGQ), and Gln-120. Cys-50 (nucleophile) is an active-site residue. 198 to 203 (GAGRMS) serves as a coordination point for NADP(+).

Belongs to the glutamyl-tRNA reductase family. In terms of assembly, homodimer.

It carries out the reaction (S)-4-amino-5-oxopentanoate + tRNA(Glu) + NADP(+) = L-glutamyl-tRNA(Glu) + NADPH + H(+). It participates in porphyrin-containing compound metabolism; protoporphyrin-IX biosynthesis; 5-aminolevulinate from L-glutamyl-tRNA(Glu): step 1/2. Its pathway is porphyrin-containing compound metabolism; chlorophyll biosynthesis. Its function is as follows. Catalyzes the NADPH-dependent reduction of glutamyl-tRNA(Glu) to glutamate 1-semialdehyde (GSA). The polypeptide is Glutamyl-tRNA reductase (Prochlorococcus marinus (strain MIT 9515)).